A 239-amino-acid polypeptide reads, in one-letter code: DNA repair protein RecO (239 aa).

It belongs to the RecO family.

Its function is as follows. Involved in DNA repair and RecF pathway recombination. The polypeptide is DNA repair protein RecO (Bifidobacterium animalis subsp. lactis (strain AD011)).